A 443-amino-acid chain; its full sequence is Probable glycine dehydrogenase (decarboxylating) subunit 1 (443 aa).

Belongs to the GcvP family. N-terminal subunit subfamily. As to quaternary structure, the glycine cleavage system is composed of four proteins: P, T, L and H. In this organism, the P 'protein' is a heterodimer of two subunits.

The enzyme catalyses N(6)-[(R)-lipoyl]-L-lysyl-[glycine-cleavage complex H protein] + glycine + H(+) = N(6)-[(R)-S(8)-aminomethyldihydrolipoyl]-L-lysyl-[glycine-cleavage complex H protein] + CO2. In terms of biological role, the glycine cleavage system catalyzes the degradation of glycine. The P protein binds the alpha-amino group of glycine through its pyridoxal phosphate cofactor; CO(2) is released and the remaining methylamine moiety is then transferred to the lipoamide cofactor of the H protein. This chain is Probable glycine dehydrogenase (decarboxylating) subunit 1, found in Chloroherpeton thalassium (strain ATCC 35110 / GB-78).